The primary structure comprises 106 residues: Large ribosomal subunit protein uL24 (106 aa).

Belongs to the universal ribosomal protein uL24 family. In terms of assembly, part of the 50S ribosomal subunit.

Its function is as follows. One of two assembly initiator proteins, it binds directly to the 5'-end of the 23S rRNA, where it nucleates assembly of the 50S subunit. One of the proteins that surrounds the polypeptide exit tunnel on the outside of the subunit. In Porphyromonas gingivalis (strain ATCC 33277 / DSM 20709 / CIP 103683 / JCM 12257 / NCTC 11834 / 2561), this protein is Large ribosomal subunit protein uL24.